The primary structure comprises 1308 residues: Misshapen-like kinase 1 (1308 aa).

Residues 25–289 form the Protein kinase domain; that stretch reads FELVEVVGNG…TEQLLKFPFI (265 aa). ATP is bound by residues 31–39 and Lys-54; that span reads VGNGTYGQV. Asp-153 (proton acceptor) is an active-site residue. Disordered stretches follow at residues 299–347, 363–383, and 395–862; these read RIQL…NVPG, KSNSEALKQQQQLQQQQQRDP, and QRRI…GGTM. Residues 317–333 show a composition bias toward acidic residues; it reads EETEYEYSGSEEEDDSH. Phosphoserine occurs at positions 324 and 326. Positions 371–380 are enriched in low complexity; that stretch reads QQQQLQQQQQ. Over residues 396 to 466 the composition is skewed to basic and acidic residues; the sequence is RRIEEQKEER…EEQRQSERLQ (71 aa). Residues 479-497 are compositionally biased toward low complexity; sequence LQQQQQQQQLQKQQQQQQQ. An omega-N-methylarginine mark is found at Arg-503 and Arg-511. Over residues 520–530 the composition is skewed to basic and acidic residues; sequence AWAREVEERAR. Residues 600–610 show a composition bias toward polar residues; it reads RSQSLQDQPTR. Residues 623 to 633 show a composition bias toward low complexity; it reads PAAVPTPTATP. At Ser-644 the chain carries Phosphoserine. The segment covering 673–685 has biased composition (polar residues); that stretch reads QRTSSIATALNTS. 6 positions are modified to phosphoserine: Asp-702, Ser-720, Ser-729, Ser-745, Ser-746, and Ser-750. Positions 702–714 are enriched in basic and acidic residues; sequence DLRRSDPGWERSD. The span at 773–797 shows a compositional bias: basic and acidic residues; sequence AIGEDFVLLKERTLDEAPKPPKKAM. Over residues 804–820 the composition is skewed to acidic residues; it reads EEVESSEEEEEEGDGEP. The segment at 842 to 1308 is mediates interaction with RAP2A; sequence MVVHDVEEIS…TLNRNCIMNW (467 aa). Residue Thr-867 is modified to Phosphothreonine. The segment at 881-918 is disordered; that stretch reads GYTNLPDVVQPSHSPTENSKGQSPPTKDGGSDYQSRGL. Positions 891–905 are enriched in polar residues; sequence PSHSPTENSKGQSPP. The 288-residue stretch at 995-1282 folds into the CNH domain; it reads NSEILCAALW…KFLCERNDKV (288 aa).

It belongs to the protein kinase superfamily. STE Ser/Thr protein kinase family. STE20 subfamily. As to quaternary structure, interacts with RAP2A and TANC1. Interacts with NCK1. Mg(2+) is required as a cofactor. Autophosphorylated. As to expression, appears to be ubiquitous, expressed in all tissue types examined. Highly expressed in the brain, moderately expressed in kidney and spleen, low levels present in heart and skeletal muscle. Isoform 2 is more abundant in the brain than isoform 1.

It localises to the cytoplasm. Its subcellular location is the postsynaptic density. It is found in the cell projection. The protein localises to the axon. The protein resides in the dendrite. It catalyses the reaction L-seryl-[protein] + ATP = O-phospho-L-seryl-[protein] + ADP + H(+). The enzyme catalyses L-threonyl-[protein] + ATP = O-phospho-L-threonyl-[protein] + ADP + H(+). In terms of biological role, serine/threonine kinase which acts as a negative regulator of Ras-related Rap2-mediated signal transduction to control neuronal structure and AMPA receptor trafficking. Required for normal synaptic density, dendrite complexity, as well as surface AMPA receptor expression in hippocampal neurons. Can activate the JNK and MAPK14/p38 pathways and mediates stimulation of the stress-activated protein kinase MAPK14/p38 MAPK downstream of the Raf/ERK pathway. Phosphorylates TANC1 upon stimulation by RAP2A, MBP and SMAD1. Has an essential function in negative selection of thymocytes, perhaps by coupling NCK1 to activation of JNK1. Activator of the Hippo signaling pathway which plays a pivotal role in organ size control and tumor suppression by restricting proliferation and promoting apoptosis. MAP4Ks act in parallel to and are partially redundant with STK3/MST2 and STK4/MST2 in the phosphorylation and activation of LATS1/2, and establish MAP4Ks as components of the expanded Hippo pathway. The protein is Misshapen-like kinase 1 of Mus musculus (Mouse).